Reading from the N-terminus, the 98-residue chain is NADH-ubiquinone oxidoreductase chain 4L (98 aa).

The next 3 membrane-spanning stretches (helical) occupy residues 1 to 21, 28 to 48, and 59 to 79; these read MTSI…GVLM, STLL…SLLI, and APLI…ALLV.

It belongs to the complex I subunit 4L family. Core subunit of respiratory chain NADH dehydrogenase (Complex I) which is composed of 45 different subunits.

It localises to the mitochondrion inner membrane. It catalyses the reaction a ubiquinone + NADH + 5 H(+)(in) = a ubiquinol + NAD(+) + 4 H(+)(out). Its function is as follows. Core subunit of the mitochondrial membrane respiratory chain NADH dehydrogenase (Complex I) which catalyzes electron transfer from NADH through the respiratory chain, using ubiquinone as an electron acceptor. Part of the enzyme membrane arm which is embedded in the lipid bilayer and involved in proton translocation. This is NADH-ubiquinone oxidoreductase chain 4L (MT-ND4L) from Phascolarctos cinereus (Koala).